Here is a 319-residue protein sequence, read N- to C-terminus: ATP-dependent 6-phosphofructokinase (319 aa).

Gly-11 contacts ATP. ADP is bound at residue 21–25 (RAVVR). ATP-binding positions include 72 to 73 (RC) and 102 to 105 (GDGS). Residue Asp-103 participates in Mg(2+) binding. A substrate-binding site is contributed by 125–127 (TID). Catalysis depends on Asp-127, which acts as the Proton acceptor. Arg-154 contributes to the ADP binding site. Substrate is bound by residues Arg-162 and 169 to 171 (MGR). ADP contacts are provided by residues 185–187 (GAE), Arg-211, and 213–215 (KLH). Substrate contacts are provided by residues Glu-222, Arg-243, and 249 to 252 (HIQR).

The protein belongs to the phosphofructokinase type A (PFKA) family. ATP-dependent PFK group I subfamily. Prokaryotic clade 'B1' sub-subfamily. In terms of assembly, homotetramer. Mg(2+) is required as a cofactor.

Its subcellular location is the cytoplasm. It catalyses the reaction beta-D-fructose 6-phosphate + ATP = beta-D-fructose 1,6-bisphosphate + ADP + H(+). It participates in carbohydrate degradation; glycolysis; D-glyceraldehyde 3-phosphate and glycerone phosphate from D-glucose: step 3/4. Allosterically activated by ADP and other diphosphonucleosides, and allosterically inhibited by phosphoenolpyruvate. In terms of biological role, catalyzes the phosphorylation of D-fructose 6-phosphate to fructose 1,6-bisphosphate by ATP, the first committing step of glycolysis. This is ATP-dependent 6-phosphofructokinase from Alkaliphilus metalliredigens (strain QYMF).